A 591-amino-acid polypeptide reads, in one-letter code: Aspartate--tRNA(Asp/Asn) ligase (591 aa).

Glu-175 contributes to the L-aspartate binding site. The aspartate stretch occupies residues 199–202 (QQFK). Residues Arg-221 and His-453 each contribute to the L-aspartate site. 221 to 223 (RDE) contacts ATP. Glu-486 contributes to the ATP binding site. L-aspartate is bound at residue Arg-493. ATP is bound at residue 538-541 (GIDR).

This sequence belongs to the class-II aminoacyl-tRNA synthetase family. Type 1 subfamily. Homodimer.

The protein resides in the cytoplasm. It catalyses the reaction tRNA(Asx) + L-aspartate + ATP = L-aspartyl-tRNA(Asx) + AMP + diphosphate. Its function is as follows. Aspartyl-tRNA synthetase with relaxed tRNA specificity since it is able to aspartylate not only its cognate tRNA(Asp) but also tRNA(Asn). Reaction proceeds in two steps: L-aspartate is first activated by ATP to form Asp-AMP and then transferred to the acceptor end of tRNA(Asp/Asn). The polypeptide is Aspartate--tRNA(Asp/Asn) ligase (Cereibacter sphaeroides (strain KD131 / KCTC 12085) (Rhodobacter sphaeroides)).